The primary structure comprises 151 residues: Putative pre-16S rRNA nuclease (151 aa).

The protein belongs to the YqgF nuclease family.

It localises to the cytoplasm. In terms of biological role, could be a nuclease involved in processing of the 5'-end of pre-16S rRNA. The polypeptide is Putative pre-16S rRNA nuclease (Pelagibacter ubique (strain HTCC1062)).